The chain runs to 332 residues: Formamidase (332 aa).

The region spanning Phe14–Pro259 is the CN hydrolase domain. The active-site Proton acceptor is Glu60. Lys132 functions as the Proton donor in the catalytic mechanism. Cys165 (nucleophile) is an active-site residue.

The protein belongs to the carbon-nitrogen hydrolase superfamily. Aliphatic amidase family.

It carries out the reaction formamide + H2O = formate + NH4(+). Functionally, is an aliphatic amidase with a restricted substrate specificity, as it only hydrolyzes formamide. The protein is Formamidase of Bacillus cereus (strain Q1).